Here is a 435-residue protein sequence, read N- to C-terminus: 5-methylthioadenosine/S-adenosylhomocysteine deaminase (435 aa).

The Zn(2+) site is built by His-65 and His-67. Residues Glu-94, Arg-150, and His-189 each contribute to the substrate site. His-216 is a Zn(2+) binding site. Residues Glu-219 and Asp-304 each coordinate substrate. Asp-304 is a Zn(2+) binding site.

Belongs to the metallo-dependent hydrolases superfamily. MTA/SAH deaminase family. Zn(2+) serves as cofactor.

The enzyme catalyses S-adenosyl-L-homocysteine + H2O + H(+) = S-inosyl-L-homocysteine + NH4(+). It carries out the reaction S-methyl-5'-thioadenosine + H2O + H(+) = S-methyl-5'-thioinosine + NH4(+). In terms of biological role, catalyzes the deamination of 5-methylthioadenosine and S-adenosyl-L-homocysteine into 5-methylthioinosine and S-inosyl-L-homocysteine, respectively. Is also able to deaminate adenosine. This is 5-methylthioadenosine/S-adenosylhomocysteine deaminase from Bacillus anthracis (strain A0248).